Consider the following 279-residue polypeptide: Lactose operon transcription activator (279 aa).

Residues 174–272 enclose the HTH araC/xylS-type domain; it reads QHAVDFINTN…EISASEYRHH (99 aa). 2 DNA-binding regions (H-T-H motif) span residues 191 to 212 and 239 to 262; these read EDVAKSVNITRSHLYKLFKKNL and ISDISRQVGYKDPLLFSKNFTKHF.

Transcriptional regulator of the lacPH genes for lactose utilization. This is Lactose operon transcription activator (lacR) from Staphylococcus xylosus.